Reading from the N-terminus, the 88-residue chain is Large ribosomal subunit protein eL37 (88 aa).

The interval 1–24 is disordered; sequence MTKGTTSFGKRHNKSHTQCRRCGR. Positions 9–24 are enriched in basic residues; sequence GKRHNKSHTQCRRCGR. Residues cysteine 19, cysteine 22, cysteine 34, and cysteine 37 each contribute to the Zn(2+) site. The segment at 19–37 adopts a C4-type zinc-finger fold; the sequence is CRRCGRKSYHIQKKTCSSC.

It belongs to the eukaryotic ribosomal protein eL37 family. Zn(2+) is required as a cofactor.

In terms of biological role, binds to the 23S rRNA. The sequence is that of Large ribosomal subunit protein eL37 (RPL37) from Schistosoma mansoni (Blood fluke).